The primary structure comprises 158 residues: Small ribosomal subunit protein uS9 (158 aa).

Belongs to the universal ribosomal protein uS9 family.

In Brucella abortus (strain S19), this protein is Small ribosomal subunit protein uS9.